The chain runs to 307 residues: Probable GTP 3',8-cyclase (307 aa).

A Radical SAM core domain is found at 4-222 (ALGREVRSVR…RTFHSREVYR (219 aa)). Arg-13 contributes to the GTP binding site. Cys-20 and Cys-24 together coordinate [4Fe-4S] cluster. Tyr-26 is a binding site for S-adenosyl-L-methionine. Cys-27 contacts [4Fe-4S] cluster. GTP is bound at residue Lys-60. S-adenosyl-L-methionine contacts are provided by Gly-64 and Ser-112. Lys-150 lines the GTP pocket. Residues Cys-240 and Cys-243 each contribute to the [4Fe-4S] cluster site. Position 245–247 (245–247 (RIR)) interacts with GTP. Cys-257 contacts [4Fe-4S] cluster.

This sequence belongs to the radical SAM superfamily. MoaA family. The cofactor is [4Fe-4S] cluster.

It carries out the reaction GTP + AH2 + S-adenosyl-L-methionine = (8S)-3',8-cyclo-7,8-dihydroguanosine 5'-triphosphate + 5'-deoxyadenosine + L-methionine + A + H(+). It functions in the pathway cofactor biosynthesis; molybdopterin biosynthesis. Its function is as follows. Catalyzes the cyclization of GTP to (8S)-3',8-cyclo-7,8-dihydroguanosine 5'-triphosphate. The chain is Probable GTP 3',8-cyclase from Methanopyrus kandleri (strain AV19 / DSM 6324 / JCM 9639 / NBRC 100938).